We begin with the raw amino-acid sequence, 339 residues long: MRQKLEEIKNSAINELKTTLSKDQLEAIRVKYLGKKGELTQILRGMGALSQEERPIVGKVANEVRSYIEETIKEAFSDIKNKEKSIRLENETIDITMPGKKQAVGKRHPLDLTLESMKDIFISMGFTIEEGPEVELDKYNFEALNIPKNHPARGEQDTFYINDNLVLRTQTSPIQIRTMENQKPPIKMIAPGKVYRSDSVDATHSPIFYQMEGLVVDKGITFSDLKGTLELFAKRMFGNKVKTKFRPHHFPFTEPSAEMDATCFVCNGEGCKVCKGSGWIELLGCGMVHPQVLRNCNIDPEVYSGFAFGFGVDRMVMMKYGIDDIRLLYESDMRFLNQF.

Residue Glu254 coordinates Mg(2+).

The protein belongs to the class-II aminoacyl-tRNA synthetase family. Phe-tRNA synthetase alpha subunit type 1 subfamily. As to quaternary structure, tetramer of two alpha and two beta subunits. The cofactor is Mg(2+).

The protein localises to the cytoplasm. It catalyses the reaction tRNA(Phe) + L-phenylalanine + ATP = L-phenylalanyl-tRNA(Phe) + AMP + diphosphate + H(+). This Clostridium botulinum (strain Langeland / NCTC 10281 / Type F) protein is Phenylalanine--tRNA ligase alpha subunit.